The chain runs to 166 residues: Interferon gamma (166 aa).

Residues 1–23 (MKYTSYILAFQLCIILGSSSCYS) form the signal peptide. The residue at position 24 (Q24) is a Pyrrolidone carboxylic acid. 3 N-linked (GlcNAc...) asparagine glycosylation sites follow: N39, N44, and N106.

This sequence belongs to the type II (or gamma) interferon family. In terms of assembly, homodimer. As to expression, released primarily from activated T lymphocytes.

Its subcellular location is the secreted. In terms of biological role, produced by lymphocytes activated by specific antigens or mitogens. IFN-gamma, in addition to having antiviral activity, has important immunoregulatory functions. It is a potent activator of macrophages, it has antiproliferative effects on transformed cells and it can potentiate the antiviral and antitumor effects of the type I interferons. In Marmota monax (Woodchuck), this protein is Interferon gamma (IFNG).